A 230-amino-acid polypeptide reads, in one-letter code: Flagellar L-ring protein (230 aa).

An N-terminal signal peptide occupies residues 1-16 (MYLVFGIIFTSVIVTS). Residue Cys-17 is the site of N-palmitoyl cysteine attachment. The S-diacylglycerol cysteine moiety is linked to residue Cys-17.

Belongs to the FlgH family. In terms of assembly, the basal body constitutes a major portion of the flagellar organelle and consists of four rings (L,P,S, and M) mounted on a central rod.

The protein localises to the cell outer membrane. It is found in the bacterial flagellum basal body. In terms of biological role, assembles around the rod to form the L-ring and probably protects the motor/basal body from shearing forces during rotation. The sequence is that of Flagellar L-ring protein from Bartonella bacilliformis (strain ATCC 35685 / KC583 / Herrer 020/F12,63).